Here is a 478-residue protein sequence, read N- to C-terminus: Sulfate adenylyltransferase subunit 1 (478 aa).

Positions 24-240 (KSMLRFLTCG…VLEDIDIDAD (217 aa)) constitute a tr-type G domain. The G1 stretch occupies residues 33–40 (GSVDDGKS). A GTP-binding site is contributed by 33–40 (GSVDDGKS). The tract at residues 91–95 (GITID) is G2. The tract at residues 112–115 (DTPG) is G3. Residues 112 to 116 (DTPGH) and 167 to 170 (NKMD) each bind GTP. The G4 stretch occupies residues 167–170 (NKMD). The tract at residues 206 to 208 (SAL) is G5.

This sequence belongs to the TRAFAC class translation factor GTPase superfamily. Classic translation factor GTPase family. CysN/NodQ subfamily. As to quaternary structure, heterodimer composed of CysD, the smaller subunit, and CysN.

It carries out the reaction sulfate + ATP + H(+) = adenosine 5'-phosphosulfate + diphosphate. The protein operates within sulfur metabolism; hydrogen sulfide biosynthesis; sulfite from sulfate: step 1/3. Its function is as follows. With CysD forms the ATP sulfurylase (ATPS) that catalyzes the adenylation of sulfate producing adenosine 5'-phosphosulfate (APS) and diphosphate, the first enzymatic step in sulfur assimilation pathway. APS synthesis involves the formation of a high-energy phosphoric-sulfuric acid anhydride bond driven by GTP hydrolysis by CysN coupled to ATP hydrolysis by CysD. The protein is Sulfate adenylyltransferase subunit 1 of Aliivibrio salmonicida (strain LFI1238) (Vibrio salmonicida (strain LFI1238)).